A 349-amino-acid polypeptide reads, in one-letter code: Protein RAE1 (349 aa).

Residues 1–21 (MATFGAPATANSNPNKSYEVT) form a disordered region. Ala2 carries the N-acetylalanine modification. The segment covering 9–21 (TANSNPNKSYEVT) has biased composition (polar residues). WD repeat units lie at residues 23-62 (SPAD…ASLA), 70-109 (SHDQ…QPVT), 112-151 (MHEG…PVHT), 153-190 (QLPD…TEFK), and 244-283 (NDIY…RLKA). The DWD box signature appears at 128 to 144 (LLATGSWDKTLKYWDTR).

This sequence belongs to the WD repeat rae1 family. In terms of assembly, part of the nuclear pore complex (NPC). The NPC has an eight-fold symmetrical structure comprising a central transport channel and two rings, the cytoplasmic and nuclear rings, to which eight filaments are attached. The cytoplasmic filaments have loose ends, while the nuclear filaments are joined in a distal ring, forming a nuclear basket. NPCs are highly dynamic in configuration and composition, and can be devided in 3 subcomplexes, the NUP62 subcomplex, the NUP107-160 subcomplex and the NUP93 subcomplex, containing approximately 30 different nucleoporin proteins. Interacts with DDB1A.

The protein localises to the nucleus envelope. The protein resides in the nucleus. It is found in the nuclear pore complex. The chain is Protein RAE1 from Arabidopsis thaliana (Mouse-ear cress).